Here is a 695-residue protein sequence, read N- to C-terminus: Probable serine/threonine-protein kinase abkD (695 aa).

The segment covering 105–119 has biased composition (polar residues); the sequence is TTKPQPCQAKPPSSK. Positions 105–149 are disordered; sequence TTKPQPCQAKPPSSKQQQQQQQQQQQQQQQQQQQQSKKKTSKDRL. Positions 118-150 form a coiled coil; that stretch reads SKQQQQQQQQQQQQQQQQQQQQSKKKTSKDRLR. Low complexity predominate over residues 120-139; that stretch reads QQQQQQQQQQQQQQQQQQQQ. The helical transmembrane segment at 177-193 threads the bilayer; sequence TIASILAAIALIIYSYE. The Protein kinase domain maps to 317–695; it reads DFDRLPIAAA…LIKDQMKKLG (379 aa). Residues 323-331 and Lys345 contribute to the ATP site; that span reads IAAASLAQV. Asp477 (proton acceptor) is an active-site residue.

Belongs to the protein kinase superfamily. ADCK protein kinase family.

Its subcellular location is the membrane. This chain is Probable serine/threonine-protein kinase abkD (abkD), found in Dictyostelium discoideum (Social amoeba).